The chain runs to 67 residues: DNA-directed RNA polymerase subunit omega (67 aa).

Belongs to the RNA polymerase subunit omega family. In terms of assembly, the RNAP catalytic core consists of 2 alpha, 1 beta, 1 beta' and 1 omega subunit. When a sigma factor is associated with the core the holoenzyme is formed, which can initiate transcription.

The enzyme catalyses RNA(n) + a ribonucleoside 5'-triphosphate = RNA(n+1) + diphosphate. Functionally, promotes RNA polymerase assembly. Latches the N- and C-terminal regions of the beta' subunit thereby facilitating its interaction with the beta and alpha subunits. The polypeptide is DNA-directed RNA polymerase subunit omega (Paracidovorax citrulli (strain AAC00-1) (Acidovorax citrulli)).